The primary structure comprises 347 residues: NAD-dependent alcohol dehydrogenase (347 aa).

K11 carries the N6-methyllysine modification. Residues C38, H68, E98, C101, C104, C112, and C154 each contribute to the Zn(2+) site. N6-methyllysine is present on K213.

It belongs to the zinc-containing alcohol dehydrogenase family. Homodimer and homotetramer. Requires Zn(2+) as cofactor.

It catalyses the reaction a primary alcohol + NAD(+) = an aldehyde + NADH + H(+). The catalysed reaction is a secondary alcohol + NAD(+) = a ketone + NADH + H(+). This chain is NAD-dependent alcohol dehydrogenase (adh), found in Sulfurisphaera tokodaii (strain DSM 16993 / JCM 10545 / NBRC 100140 / 7) (Sulfolobus tokodaii).